The chain runs to 296 residues: Protein ea31 (296 aa).

This is Protein ea31 (ea31) from Escherichia phage lambda (Bacteriophage lambda).